A 405-amino-acid polypeptide reads, in one-letter code: Acetyl-CoA decarbonylase/synthase complex subunit delta (405 aa).

The protein belongs to the CdhD family. As to quaternary structure, heterodimer of delta and gamma chains. The ACDS complex is made up of alpha, epsilon, beta, gamma and delta chains with a probable stoichiometry of (alpha(2)epsilon(2))(4)-beta(8)-(gamma(1)delta(1))(8).

Functionally, part of a complex that catalyzes the reversible cleavage of acetyl-CoA, allowing autotrophic growth from CO(2). Probably maintains the overall quaternary structure of the ACDS complex. The chain is Acetyl-CoA decarbonylase/synthase complex subunit delta from Methanocaldococcus jannaschii (strain ATCC 43067 / DSM 2661 / JAL-1 / JCM 10045 / NBRC 100440) (Methanococcus jannaschii).